The following is an 834-amino-acid chain: Leucine--tRNA ligase (834 aa).

The 'HIGH' region signature appears at 42 to 52 (PYPSGKLHMGH). The 'KMSKS' region signature appears at 619 to 623 (KMSKS). ATP is bound at residue K622.

It belongs to the class-I aminoacyl-tRNA synthetase family.

The protein localises to the cytoplasm. It catalyses the reaction tRNA(Leu) + L-leucine + ATP = L-leucyl-tRNA(Leu) + AMP + diphosphate. In Actinobacillus pleuropneumoniae serotype 7 (strain AP76), this protein is Leucine--tRNA ligase.